The sequence spans 212 residues: Protein-L-isoaspartate O-methyltransferase (212 aa).

Ser-60 is a catalytic residue.

The protein belongs to the methyltransferase superfamily. L-isoaspartyl/D-aspartyl protein methyltransferase family.

It is found in the cytoplasm. It catalyses the reaction [protein]-L-isoaspartate + S-adenosyl-L-methionine = [protein]-L-isoaspartate alpha-methyl ester + S-adenosyl-L-homocysteine. Functionally, catalyzes the methyl esterification of L-isoaspartyl residues in peptides and proteins that result from spontaneous decomposition of normal L-aspartyl and L-asparaginyl residues. It plays a role in the repair and/or degradation of damaged proteins. This chain is Protein-L-isoaspartate O-methyltransferase, found in Methanococcus maripaludis (strain C7 / ATCC BAA-1331).